The primary structure comprises 146 residues: Hemoglobin subunit beta (146 aa).

N-acetylvaline is present on V1. The Globin domain maps to 2–146; that stretch reads HLSGEEKAAV…VANALAHKYH (145 aa). T12 carries the post-translational modification Phosphothreonine. A Phosphoserine modification is found at S44. N6-acetyllysine is present on K59. A heme b-binding site is contributed by H63. K82 bears the N6-acetyllysine mark. Position 92 (H92) interacts with heme b. C93 carries the S-nitrosocysteine modification. K144 is subject to N6-acetyllysine.

This sequence belongs to the globin family. Heterotetramer of two alpha chains and two beta chains. In terms of tissue distribution, red blood cells.

In terms of biological role, involved in oxygen transport from the lung to the various peripheral tissues. This chain is Hemoglobin subunit beta (HBB), found in Tupaia glis (Common tree shrew).